Consider the following 98-residue polypeptide: NADH-ubiquinone oxidoreductase chain 4L (98 aa).

The next 3 helical transmembrane spans lie at 1-21 (MYSS…VNLI), 27-47 (FLMT…FVPI), and 61-81 (VILL…MVLM).

It belongs to the complex I subunit 4L family.

It is found in the mitochondrion membrane. It catalyses the reaction a ubiquinone + NADH + 5 H(+)(in) = a ubiquinol + NAD(+) + 4 H(+)(out). Its function is as follows. Core subunit of the mitochondrial membrane respiratory chain NADH dehydrogenase (Complex I) that is believed to belong to the minimal assembly required for catalysis. Complex I functions in the transfer of electrons from NADH to the respiratory chain. The immediate electron acceptor for the enzyme is believed to be ubiquinone. This chain is NADH-ubiquinone oxidoreductase chain 4L (ND4L), found in Lumbricus terrestris (Common earthworm).